Consider the following 162-residue polypeptide: NADH-quinone oxidoreductase subunit I (162 aa).

4Fe-4S ferredoxin-type domains lie at 53 to 83 (LRRYPNGEERCIACKLCEAVCPAQAITIESE) and 93 to 122 (TRYDIDMTKCIYCGFCQEACPVDAIVEGPN). 8 residues coordinate [4Fe-4S] cluster: Cys63, Cys66, Cys69, Cys73, Cys102, Cys105, Cys108, and Cys112.

This sequence belongs to the complex I 23 kDa subunit family. In terms of assembly, NDH-1 is composed of 14 different subunits. Subunits NuoA, H, J, K, L, M, N constitute the membrane sector of the complex. [4Fe-4S] cluster is required as a cofactor.

It is found in the cell inner membrane. The catalysed reaction is a quinone + NADH + 5 H(+)(in) = a quinol + NAD(+) + 4 H(+)(out). Its function is as follows. NDH-1 shuttles electrons from NADH, via FMN and iron-sulfur (Fe-S) centers, to quinones in the respiratory chain. The immediate electron acceptor for the enzyme in this species is believed to be ubiquinone. Couples the redox reaction to proton translocation (for every two electrons transferred, four hydrogen ions are translocated across the cytoplasmic membrane), and thus conserves the redox energy in a proton gradient. The chain is NADH-quinone oxidoreductase subunit I from Erythrobacter litoralis (strain HTCC2594).